The chain runs to 317 residues: Type II methyltransferase M.NgoBI (317 aa).

The region spanning 2–302 (YKTIDLFSGI…KICSLLFPAR (301 aa)) is the SAM-dependent MTase C5-type domain. C71 is an active-site residue.

This sequence belongs to the class I-like SAM-binding methyltransferase superfamily. C5-methyltransferase family.

The catalysed reaction is a 2'-deoxycytidine in DNA + S-adenosyl-L-methionine = a 5-methyl-2'-deoxycytidine in DNA + S-adenosyl-L-homocysteine + H(+). A methylase, recognizes the double-stranded sequence 5'-RGCGCY-3', methylates C-5 on both strands, and protects the DNA from cleavage by the NgoBI endonuclease. The protein is Type II methyltransferase M.NgoBI (ngoBIM) of Neisseria gonorrhoeae.